We begin with the raw amino-acid sequence, 542 residues long: CTP synthase (542 aa).

The tract at residues 1–265 (MTRYIFVTGG…DEIIVERFGL (265 aa)) is amidoligase domain. Position 13 (serine 13) interacts with CTP. Serine 13 provides a ligand contact to UTP. ATP is bound by residues 14 to 19 (SLGKGI) and aspartate 71. Mg(2+) contacts are provided by aspartate 71 and glutamate 139. Residues 146–148 (DIE), 186–191 (KTKPTQ), and lysine 222 contribute to the CTP site. UTP-binding positions include 186-191 (KTKPTQ) and lysine 222. Positions 290 to 541 (TIAMVGKYME…VRAALENAGG (252 aa)) constitute a Glutamine amidotransferase type-1 domain. L-glutamine is bound at residue glycine 351. Cysteine 378 (nucleophile; for glutamine hydrolysis) is an active-site residue. Residues 379–382 (LGLQ), glutamate 402, and arginine 469 contribute to the L-glutamine site. Catalysis depends on residues histidine 514 and glutamate 516.

Belongs to the CTP synthase family. Homotetramer.

The catalysed reaction is UTP + L-glutamine + ATP + H2O = CTP + L-glutamate + ADP + phosphate + 2 H(+). It carries out the reaction L-glutamine + H2O = L-glutamate + NH4(+). The enzyme catalyses UTP + NH4(+) + ATP = CTP + ADP + phosphate + 2 H(+). Its pathway is pyrimidine metabolism; CTP biosynthesis via de novo pathway; CTP from UDP: step 2/2. Its activity is regulated as follows. Allosterically activated by GTP, when glutamine is the substrate; GTP has no effect on the reaction when ammonia is the substrate. The allosteric effector GTP functions by stabilizing the protein conformation that binds the tetrahedral intermediate(s) formed during glutamine hydrolysis. Inhibited by the product CTP, via allosteric rather than competitive inhibition. In terms of biological role, catalyzes the ATP-dependent amination of UTP to CTP with either L-glutamine or ammonia as the source of nitrogen. Regulates intracellular CTP levels through interactions with the four ribonucleotide triphosphates. This is CTP synthase from Hahella chejuensis (strain KCTC 2396).